Reading from the N-terminus, the 250-residue chain is uncharacterized protein (250 aa).

The helical transmembrane segment at 4-24 (FKYLLFLVVFAVFFLTFAFFD) threads the bilayer.

Its subcellular location is the membrane. This is an uncharacterized protein from Methanocaldococcus jannaschii (strain ATCC 43067 / DSM 2661 / JAL-1 / JCM 10045 / NBRC 100440) (Methanococcus jannaschii).